Consider the following 35-residue polypeptide: Cytochrome c-550 (35 aa).

3 residues coordinate heme c: Cys17, Cys20, and His21.

Post-translationally, binds 1 heme c group covalently per subunit.

Monoheme cytochrome which functions as an electron carrier in the reduction of nitrite by membrane vesicles. This Virgibacillus halodenitrificans (Bacillus halodenitrificans) protein is Cytochrome c-550.